The chain runs to 201 residues: Cell division protein SepF (201 aa).

Residues 27 to 38 show a composition bias toward basic and acidic residues; sequence VQERTSVQRDSR. Residues 27-99 are disordered; sequence VQERTSVQRD…PRVQNKDSVR (73 aa). A compositionally biased stretch (polar residues) spans 43-54; the sequence is QEASQRSHMTNS. Over residues 72–81 the composition is skewed to basic and acidic residues; it reads NRQERQRVQR. The segment covering 83-92 has biased composition (polar residues); that stretch reads NAYQQATPRV.

It belongs to the SepF family. In terms of assembly, homodimer. Interacts with FtsZ.

The protein resides in the cytoplasm. Functionally, cell division protein that is part of the divisome complex and is recruited early to the Z-ring. Probably stimulates Z-ring formation, perhaps through the cross-linking of FtsZ protofilaments. Its function overlaps with FtsA. The protein is Cell division protein SepF of Streptococcus agalactiae serotype V (strain ATCC BAA-611 / 2603 V/R).